The primary structure comprises 729 residues: Fibroblast growth factor receptor homolog 1 (729 aa).

A signal peptide spans 1–36; the sequence is MAAAWSWRASHSTITMTSGSLVVLFLLLSIWQPAVQ. Residues 37 to 309 lie on the Extracellular side of the membrane; sequence VEGRRQMANS…VASGSLHSTS (273 aa). A disordered region spans residues 56-101; sequence ARSQNKTPAITNNANQSSTSSADLDDGAADDDDNKADLPVNVSSKP. The segment covering 66-77 has biased composition (low complexity); it reads TNNANQSSTSSA. N-linked (GlcNAc...) asparagine glycosylation is present at asparagine 70. Positions 78 to 89 are enriched in acidic residues; the sequence is DLDDGAADDDDN. N-linked (GlcNAc...) asparagine glycans are attached at residues asparagine 96, asparagine 134, asparagine 140, asparagine 171, asparagine 207, asparagine 213, asparagine 242, asparagine 246, and asparagine 282. Ig-like C2-type domains are found at residues 106–192 and 203–279; these read PKKM…VIVS and TGPL…NSLG. Cysteine 125 and cysteine 174 are disulfide-bonded. Cysteine 220 and cysteine 272 form a disulfide bridge. A helical transmembrane segment spans residues 310–330; it reads FVYIFVFGGLIFIFMTTLFVF. Residues 331 to 729 are Cytoplasmic-facing; it reads YAIRKMKHEK…TDNLQKWCNY (399 aa). The 277-residue stretch at 416–692 folds into the Protein kinase domain; it reads LVLGATLGEG…EIVEYMDKLL (277 aa). Residues 422–430 and lysine 443 contribute to the ATP site; that span reads LGEGAFGRV. The active-site Proton acceptor is aspartate 556. Position 587 is a phosphotyrosine; by autocatalysis (tyrosine 587).

The protein belongs to the protein kinase superfamily. Tyr protein kinase family. Fibroblast growth factor receptor subfamily. In terms of tissue distribution, in early embryos, expression is specific to mesodermal primordium and invaginated mesodermal cells. At later stages, expression is seen in putative muscle precursor cells and in the CNS.

The protein resides in the membrane. The catalysed reaction is L-tyrosyl-[protein] + ATP = O-phospho-L-tyrosyl-[protein] + ADP + H(+). Functionally, may be required for patterning of muscle precursor cells. May be essential for generation of mesodermal and endodermal layers, invaginations of various types of cells and CNS formation. The sequence is that of Fibroblast growth factor receptor homolog 1 (htl) from Drosophila melanogaster (Fruit fly).